We begin with the raw amino-acid sequence, 588 residues long: Pre-mRNA 3'-end-processing factor FIP1 (588 aa).

A compositionally biased stretch (basic and acidic residues) spans 1–10 (MSAGEVERLV). Disordered stretches follow at residues 1 to 81 (MSAG…EDDV), 223 to 291 (QGRT…ESPD), and 334 to 588 (VDNN…TPAE). Residues 1–96 (MSAGEVERLV…DIKTGAPQYG (96 aa)) are sufficient for interaction with PAPOLA. Positions 1-341 (MSAGEVERLV…TAVDNNFSKP (341 aa)) are necessary for stimulating PAPOLA activity. Composition is skewed to acidic residues over residues 19–40 (GDEE…EEEN) and 66–80 (TEDD…DEDD). A phosphoserine mark is found at serine 70, serine 72, and serine 74. The segment at 122 to 228 (KGVDLDAPGS…FKVQQGRTGN (107 aa)) is sufficient for interaction with CPSF4. Over residues 259 to 270 (STSSQSQTSTAS) the composition is skewed to low complexity. Over residues 280–291 (WQDRYGRAESPD) the composition is skewed to basic and acidic residues. Serine 289 is modified (phosphoserine). Pro residues predominate over residues 340-398 (KPPPFFPPGAPPTHLPPPPFLPPPPTVSTAPPLIPPPGIPITVPPPGFPPPPGAPPPSL). The residue at position 420 (tyrosine 420) is a Phosphotyrosine. The tract at residues 437–588 (SLVDTSKQWD…QESTEATPAE (152 aa)) is sufficient for interaction with CPSF1 and CSTF3. Residues 448-486 (YARREKDRDRERDRDRERDRDRDRERERTRERERERDHS) are compositionally biased toward basic and acidic residues. The interval 451–484 (REKDRDRERDRDRERDRDRDRERERTRERERERD) is arg/Asp/Glu-rich domain. Serine 486 carries the post-translational modification Phosphoserine. Threonine 488 bears the Phosphothreonine mark. Phosphoserine is present on residues serine 490 and serine 494. Basic and acidic residues predominate over residues 495-522 (DEERYRYREYAERGYERHRASREKEERH). Residues 536-545 (KSSRSNSRRR) are compositionally biased toward basic residues. The residue at position 548 (serine 548) is a Phosphoserine. A compositionally biased stretch (basic residues) spans 554–564 (HRRHKHKKSKR).

It belongs to the FIP1 family. As to quaternary structure, component of the cleavage and polyadenylation specificity factor (CPSF) complex, composed of CPSF1, CPSF2, CPSF3, CPSF4 and FIP1L1. Found in a complex with CPSF1, FIP1L1 and PAPOLA. Interacts with CPSF1, CPSF4, CSTF2 and CSTF3. Interacts with AHCYL1 (when phosphorylated); the interaction is direct and associates AHCYL1 with the CPSF complex and RNA. Interacts with PAPOLA; the interaction seems to be increased by the interaction with AHCYL1. Interacts with NUDT21/CPSF5; this interaction occurs in a RNA sequence-specific manner. Interacts (preferentially via unphosphorylated form and Arg/Glu/Asp-rich domain) with CPSF6 (via Arg/Ser-rich domain); this interaction mediates, at least in part, the interaction between the CFIm and CPSF complexes and may be inhibited by CPSF6 hyper-phosphorylation. Interacts (preferentially via unphosphorylated form and Arg/Asp/Glu-rich domain) with CPSF7 (via Arg/Ser-rich domain); this interaction mediates, at least in part, the interaction between the CFIm and CPSF complexes and may be inhibited by CPSF7 hyper-phosphorylation.

It is found in the nucleus. In terms of biological role, component of the cleavage and polyadenylation specificity factor (CPSF) complex that plays a key role in pre-mRNA 3'-end formation, recognizing the AAUAAA signal sequence and interacting with poly(A) polymerase and other factors to bring about cleavage and poly(A) addition. FIP1L1 contributes to poly(A) site recognition and stimulates poly(A) addition. Binds to U-rich RNA sequence elements surrounding the poly(A) site. May act to tether poly(A) polymerase to the CPSF complex. This Pongo abelii (Sumatran orangutan) protein is Pre-mRNA 3'-end-processing factor FIP1 (FIP1L1).